The following is a 201-amino-acid chain: Molybdenum cofactor guanylyltransferase (201 aa).

Residues Leu-15–Gly-17, Lys-28, Asp-74, and Asp-104 contribute to the GTP site. Mg(2+) is bound at residue Asp-104.

The protein belongs to the MobA family. Monomer. The cofactor is Mg(2+).

The protein resides in the cytoplasm. It catalyses the reaction Mo-molybdopterin + GTP + H(+) = Mo-molybdopterin guanine dinucleotide + diphosphate. Its function is as follows. Transfers a GMP moiety from GTP to Mo-molybdopterin (Mo-MPT) cofactor (Moco or molybdenum cofactor) to form Mo-molybdopterin guanine dinucleotide (Mo-MGD) cofactor. The protein is Molybdenum cofactor guanylyltransferase of Pseudomonas syringae pv. syringae (strain B728a).